We begin with the raw amino-acid sequence, 220 residues long: uncharacterized protein (220 aa).

7 helical membrane-spanning segments follow: residues 25-45 (YFLLGLTLAFSAVVAYISMSL), 50-70 (PGLILMLAGFYGLLFLTYKLS), 74-94 (LGILSTFAFTGFLGYTLGPIL), 105-125 (IVVLALAGTAAVFFACSAYVL), 135-155 (SGTIFALFIVLLLGMVASFFF), 158-178 (PMLYIAISGLFVVFSTLGILY), and 196-216 (VSIFVSLYNLFISLLNIFSIL).

Belongs to the BI1 family.

It is found in the cell membrane. This is an uncharacterized protein from Pasteurella multocida (strain Pm70).